The following is a 312-amino-acid chain: Holliday junction branch migration complex subunit RuvB (312 aa).

The tract at residues 1–168 (MKTNNEFRPQ…FGHVFYLSEY (168 aa)) is large ATPase domain (RuvB-L). ATP-binding positions include R8, G49, K52, T53, T54, 115–117 (EDF), R158, Y168, and R206. Position 53 (T53) interacts with Mg(2+). A small ATPAse domain (RuvB-S) region spans residues 169–234 (ETSEIAAIIL…NIKNIFEKIQ (66 aa)). A head domain (RuvB-H) region spans residues 237–312 (DFGLEEQDIN…EFLKNNQLIK (76 aa)). 2 residues coordinate DNA: K290 and R295.

Belongs to the RuvB family. As to quaternary structure, homohexamer. Forms an RuvA(8)-RuvB(12)-Holliday junction (HJ) complex. HJ DNA is sandwiched between 2 RuvA tetramers; dsDNA enters through RuvA and exits via RuvB. An RuvB hexamer assembles on each DNA strand where it exits the tetramer. Each RuvB hexamer is contacted by two RuvA subunits (via domain III) on 2 adjacent RuvB subunits; this complex drives branch migration. In the full resolvosome a probable DNA-RuvA(4)-RuvB(12)-RuvC(2) complex forms which resolves the HJ.

It is found in the cytoplasm. The catalysed reaction is ATP + H2O = ADP + phosphate + H(+). Its function is as follows. The RuvA-RuvB-RuvC complex processes Holliday junction (HJ) DNA during genetic recombination and DNA repair, while the RuvA-RuvB complex plays an important role in the rescue of blocked DNA replication forks via replication fork reversal (RFR). RuvA specifically binds to HJ cruciform DNA, conferring on it an open structure. The RuvB hexamer acts as an ATP-dependent pump, pulling dsDNA into and through the RuvAB complex. RuvB forms 2 homohexamers on either side of HJ DNA bound by 1 or 2 RuvA tetramers; 4 subunits per hexamer contact DNA at a time. Coordinated motions by a converter formed by DNA-disengaged RuvB subunits stimulates ATP hydrolysis and nucleotide exchange. Immobilization of the converter enables RuvB to convert the ATP-contained energy into a lever motion, pulling 2 nucleotides of DNA out of the RuvA tetramer per ATP hydrolyzed, thus driving DNA branch migration. The RuvB motors rotate together with the DNA substrate, which together with the progressing nucleotide cycle form the mechanistic basis for DNA recombination by continuous HJ branch migration. Branch migration allows RuvC to scan DNA until it finds its consensus sequence, where it cleaves and resolves cruciform DNA. The sequence is that of Holliday junction branch migration complex subunit RuvB from Ureaplasma urealyticum serovar 10 (strain ATCC 33699 / Western).